Here is a 219-residue protein sequence, read N- to C-terminus: Small ribosomal subunit protein uS3 (219 aa).

Positions 38–106 (VRKFVKTKLQ…QVAVNIVEVK (69 aa)) constitute a KH type-2 domain.

Belongs to the universal ribosomal protein uS3 family. In terms of assembly, part of the 30S ribosomal subunit. Forms a tight complex with proteins S10 and S14.

Functionally, binds the lower part of the 30S subunit head. Binds mRNA in the 70S ribosome, positioning it for translation. This Desulfitobacterium hafniense (strain DSM 10664 / DCB-2) protein is Small ribosomal subunit protein uS3.